The following is a 451-amino-acid chain: AP-3 complex subunit mu (451 aa).

The region spanning Asn191 to Arg450 is the MHD domain.

The protein belongs to the adaptor complexes medium subunit family. In terms of assembly, adaptor protein complex 3 (AP-3) is a heterotetramer composed of 2 large adaptins (APL5 and APL6), a medium adaptin (APM3) and a small adaptin (APS3).

The protein localises to the golgi apparatus. Its subcellular location is the cytoplasmic vesicle membrane. In terms of biological role, part of the AP-3 complex, an adaptor-related complex which is not clathrin-associated. The complex is associated with the Golgi region as well as more peripheral structures. It facilitates the budding of vesicles from the Golgi membrane and may be directly involved in trafficking to the vacuole. The polypeptide is AP-3 complex subunit mu (APM3) (Eremothecium gossypii (strain ATCC 10895 / CBS 109.51 / FGSC 9923 / NRRL Y-1056) (Yeast)).